We begin with the raw amino-acid sequence, 378 residues long: UPF0754 membrane protein BCQ_0944 (378 aa).

Helical transmembrane passes span 1–21 (MNIWLSMLTTTGLGAIIGGFT) and 357–377 (YLGALLGGMIGIVQGLLLLFL).

This sequence belongs to the UPF0754 family.

Its subcellular location is the cell membrane. This Bacillus cereus (strain Q1) protein is UPF0754 membrane protein BCQ_0944.